The primary structure comprises 553 residues: Zinc finger protein 324A (553 aa).

The region spanning 1–72 (MAFEDVAVYF…SGTDTTLSRT (72 aa)) is the KRAB domain. The short motif at 130-135 (PSRERK) is the Nuclear localization signal element. A disordered region spans residues 186–221 (GRQPRTPERQKPCAQEVPGRTFGSAQDLEAAGGRGH). 9 C2H2-type zinc fingers span residues 257–279 (FECR…LRTH), 285–307 (YECA…QRIH), 313–335 (YACP…QRIH), 341–363 (FRCS…RKIH), 369–391 (YACA…ERTH), 397–419 (FVCA…QRVH), 425–447 (FACP…QLLH), 453–475 (FRCV…RRIH), and 481–503 (FVCT…QRIH). The tract at residues 502–553 (IHTGEKTVRRSRASLHPQARSVAGASSEGAPAKETEPTPASGPAAVSQPAEV) is disordered.

This sequence belongs to the krueppel C2H2-type zinc-finger protein family. Expressed at high levels in the spleen, thymus, and PBMC, at low levels in the prostate, ovary, small intestine, colon (mucosal lining), placenta, lung, and pancreas, and very weakly expressed in the liver and kidney.

It localises to the nucleus. Functionally, may be involved in transcriptional regulation. May be involved in regulation of cell proliferation. The protein is Zinc finger protein 324A (ZNF324) of Homo sapiens (Human).